Here is a 500-residue protein sequence, read N- to C-terminus: MTDAVKVGFVPLSTAPKGVLVVFTDESMKFGPASRKHLVNAGDVVKRAAAAAEFKGKSGSALDILAPQGVKAARLIVVGTGKAGSVKDEDFIKLGGTATGKIGSNASAVTLVAELPGGAMKPHQAAALAVGARLRGYKFDRYKTKTKDKDKALVAQFSVAVADVAAARKAFIRDAHVANGVVLARELVNEPPNVLYPAEFARRAAQLRKLGVKVEIFDVKAMEKLGMGALLGVSQGSYHPGRMVVMRWNGASNKADKPVAFVGKGVCFDTGGISIKPAGSMEEMKGDMAGAACVVGLMHALAARKAKVNAVGAIGIVENMPDGNAQRPGDIVKTMSGQTIEIINTDAEGRLVLADVLWYVTQKHKPKFIVDLATLTGAILVALGTEYAGLFSNNDQLSERLSKSGDATGERVWRMPLGPEFDKQIDSKFADMKNAAGRWGGSITAAQLLQRFVDNTPWAHLDIAGTAMGAPATDINTSWGSGYGVRLLDHLVAQHYETKR.

Positions 264 and 269 each coordinate Mn(2+). Lysine 276 is a catalytic residue. 3 residues coordinate Mn(2+): aspartate 287, aspartate 346, and glutamate 348. The active site involves arginine 350.

This sequence belongs to the peptidase M17 family. Mn(2+) is required as a cofactor.

The protein resides in the cytoplasm. The catalysed reaction is Release of an N-terminal amino acid, Xaa-|-Yaa-, in which Xaa is preferably Leu, but may be other amino acids including Pro although not Arg or Lys, and Yaa may be Pro. Amino acid amides and methyl esters are also readily hydrolyzed, but rates on arylamides are exceedingly low.. It carries out the reaction Release of an N-terminal amino acid, preferentially leucine, but not glutamic or aspartic acids.. Presumably involved in the processing and regular turnover of intracellular proteins. Catalyzes the removal of unsubstituted N-terminal amino acids from various peptides. This is Probable cytosol aminopeptidase from Afipia carboxidovorans (strain ATCC 49405 / DSM 1227 / KCTC 32145 / OM5) (Oligotropha carboxidovorans).